The sequence spans 34 residues: Crassicorin-II (34 aa).

A disulfide bridge links C6 with C30.

Highly expressed by the mesenteries. Moderately expressed by the pharynx. Weakly expressed by the gonad and pedal disk. No expression in tentacle.

It is found in the secreted. Its subcellular location is the nematocyst. In terms of biological role, peptide with both antimicrobial and neurotoxin activities. Cationic AMP with antimicrobial activity against both Gram-positive bacteria (B.subtilis) and Gram-negative bacteria (E.coli and S.enterica). Shows no significant antimicrobial activity against bacteria S.aureus and P.aeruginosa, as well as the fungus C.albicans. In vivo, induces reversible paralytic activity towards the shrimp P.paucidens. May act by impairing sodium or potassium channels in the prey. The polypeptide is Crassicorin-II (Urticina crassicornis (Mottled anemone)).